The chain runs to 191 residues: Adenylate cyclase CyaB (191 aa).

Residues 9-180 enclose the CYTH domain; the sequence is RFEVEFKYRL…TRSYRTLCEQ (172 aa). Residue tyrosine 46 is the Proton acceptor of the active site.

The protein belongs to the adenylyl cyclase CyaB family.

It is found in the cytoplasm. It catalyses the reaction ATP = 3',5'-cyclic AMP + diphosphate. Its activity is regulated as follows. Inhibited by GTP. Functionally, in vitro, CyaB catalyzes the biosynthesis of cyclic AMP (cAMP) from ATP. It seems that under the physiological conditions CyaB has no function in cAMP processes. In vitro, it is also able to hydrolyze substrates such as thiamine triphosphate (ThTP) and inorganic triphosphate (PPPi) at a low rate. It has a slight preference for ThTP over ATP and PPPi in the presence of manganese ions. This PPPase activity is probably not of physiological importance. This chain is Adenylate cyclase CyaB (cyaB), found in Aeromonas hydrophila.